Here is a 232-residue protein sequence, read N- to C-terminus: Octanoyltransferase (232 aa).

One can recognise a BPL/LPL catalytic domain in the interval Asp43 to Val231. Residues Arg88–His95, Ala160–Gly162, and Gly173–Ala175 each bind substrate. Cys191 serves as the catalytic Acyl-thioester intermediate.

Belongs to the LipB family.

Its subcellular location is the cytoplasm. The enzyme catalyses octanoyl-[ACP] + L-lysyl-[protein] = N(6)-octanoyl-L-lysyl-[protein] + holo-[ACP] + H(+). Its pathway is protein modification; protein lipoylation via endogenous pathway; protein N(6)-(lipoyl)lysine from octanoyl-[acyl-carrier-protein]: step 1/2. Catalyzes the transfer of endogenously produced octanoic acid from octanoyl-acyl-carrier-protein onto the lipoyl domains of lipoate-dependent enzymes. Lipoyl-ACP can also act as a substrate although octanoyl-ACP is likely to be the physiological substrate. In Flavobacterium psychrophilum (strain ATCC 49511 / DSM 21280 / CIP 103535 / JIP02/86), this protein is Octanoyltransferase.